Consider the following 161-residue polypeptide: Allophycocyanin alpha chain (161 aa).

Residue N71 is modified to N4-methylasparagine. A (2R,3E)-phycocyanobilin-binding site is contributed by C81.

This sequence belongs to the phycobiliprotein family. In terms of assembly, heterodimer of an alpha and a beta chain. Post-translationally, contains one covalently linked phycocyanobilin chromophore.

Its subcellular location is the plastid. It localises to the cyanelle thylakoid membrane. In terms of biological role, light-harvesting photosynthetic bile pigment-protein from the phycobiliprotein complex. Allophycocyanin has a maximum absorption at approximately 650 nanometers. The chain is Allophycocyanin alpha chain (apcA) from Cyanophora paradoxa.